The primary structure comprises 468 residues: Peroxisome proliferator-activated receptor alpha (468 aa).

The segment at residues 99–173 is a DNA-binding region (nuclear receptor); sequence NIECRICGDK…VGMSHNAIRF (75 aa). 2 consecutive NR C4-type zinc fingers follow at residues 102–122 and 139–161; these read CRICGDKASGYHYGVHACEGC and CDRSCKIQKKNRNKCQYCRFHKC. One can recognise an NR LBD domain in the interval 239-466; the sequence is FVIHDMETLC…HPLLQEIYRD (228 aa). Residues Ser280, Tyr314, and Tyr464 each coordinate indeglitazar. The segment at 304–433 is required for heterodimerization with RXRA; the sequence is DQVTLLKYGV…PKLLQKMADL (130 aa).

This sequence belongs to the nuclear hormone receptor family. NR1 subfamily. As to quaternary structure, heterodimer; with RXRA. This heterodimerization is required for DNA binding and transactivation activity. Interacts with NCOA3 coactivator. Interacts with CITED2; the interaction stimulates its transcriptional activity. Also interacts with PPARBP in vitro. Interacts with AKAP13, LPIN1, PRDM16 and coactivator NCOA6. Interacts with ASXL1 and ASXL2. Interacts with PER2. Interacts with SIRT1; the interaction seems to be modulated by NAD(+) levels. Interacts with CRY1 and CRY2. In hepatocytes, interacts with PAQR3 and HUWE1; the interactions promote PPARA poylubiquitination and HUWE1-mediated degradation. Post-translationally, ubiquitinated by E3 ubiquitin-protein ligase HUWE1; leading to proteasomal degradation. In terms of processing, phosphorylated. As to expression, skeletal muscle, liver, heart and kidney. Expressed in monocytes.

Its subcellular location is the nucleus. Its function is as follows. Ligand-activated transcription factor. Key regulator of lipid metabolism. Activated by the endogenous ligand 1-palmitoyl-2-oleoyl-sn-glycerol-3-phosphocholine (16:0/18:1-GPC). Activated by oleylethanolamide, a naturally occurring lipid that regulates satiety. Receptor for peroxisome proliferators such as hypolipidemic drugs and fatty acids. Regulates the peroxisomal beta-oxidation pathway of fatty acids. Functions as a transcription activator for the ACOX1 and P450 genes. Transactivation activity requires heterodimerization with RXRA and is antagonized by NR2C2. May be required for the propagation of clock information to metabolic pathways regulated by PER2. In Homo sapiens (Human), this protein is Peroxisome proliferator-activated receptor alpha (PPARA).